The chain runs to 350 residues: Dihydroorotate dehydrogenase (quinone) (350 aa).

FMN is bound by residues 61-65 (AGLDK) and threonine 85. Lysine 65 is a substrate binding site. Substrate is bound at residue 110 to 114 (NRMGF). FMN is bound by residues asparagine 139 and asparagine 172. Asparagine 172 lines the substrate pocket. The Nucleophile role is filled by serine 175. Asparagine 177 serves as a coordination point for substrate. FMN is bound by residues lysine 217 and threonine 245. A substrate-binding site is contributed by 246-247 (NT). FMN contacts are provided by residues glycine 268, glycine 297, and 318–319 (YS).

This sequence belongs to the dihydroorotate dehydrogenase family. Type 2 subfamily. Monomer. It depends on FMN as a cofactor.

It is found in the cell membrane. The enzyme catalyses (S)-dihydroorotate + a quinone = orotate + a quinol. Its pathway is pyrimidine metabolism; UMP biosynthesis via de novo pathway; orotate from (S)-dihydroorotate (quinone route): step 1/1. In terms of biological role, catalyzes the conversion of dihydroorotate to orotate with quinone as electron acceptor. The sequence is that of Dihydroorotate dehydrogenase (quinone) from Flavobacterium lutescens.